Reading from the N-terminus, the 699-residue chain is Glycine--tRNA ligase beta subunit (699 aa).

Belongs to the class-II aminoacyl-tRNA synthetase family. Tetramer of two alpha and two beta subunits.

It is found in the cytoplasm. The enzyme catalyses tRNA(Gly) + glycine + ATP = glycyl-tRNA(Gly) + AMP + diphosphate. The chain is Glycine--tRNA ligase beta subunit from Methylobacterium radiotolerans (strain ATCC 27329 / DSM 1819 / JCM 2831 / NBRC 15690 / NCIMB 10815 / 0-1).